Here is an 83-residue protein sequence, read N- to C-terminus: Apolipoprotein C-I, basic form (83 aa).

Residues 1–26 form the signal peptide; sequence MRLFLSLPVLVVVLSMVLEGPAPVQG.

The protein belongs to the apolipoprotein C1 family.

Its subcellular location is the secreted. In terms of biological role, inhibitor of lipoprotein binding to the low density lipoprotein (LDL) receptor, LDL receptor-related protein, and very low density lipoprotein (VLDL) receptor. Associates with high density lipoproteins (HDL) and the triacylglycerol-rich lipoproteins in the plasma and makes up about 10% of the protein of the VLDL and 2% of that of HDL. Appears to interfere directly with fatty acid uptake and is also the major plasma inhibitor of cholesteryl ester transfer protein (CETP). Binds free fatty acids and reduces their intracellular esterification. Modulates the interaction of APOE with beta-migrating VLDL and inhibits binding of beta-VLDL to the LDL receptor-related protein. This chain is Apolipoprotein C-I, basic form (APOC1), found in Papio anubis (Olive baboon).